Consider the following 586-residue polypeptide: Phosphomethylpyrimidine synthase (586 aa).

Residues 1-59 (MKQSVSAEQIELKSSLPGSKKVYVDGPREGMKVPMREIEQSETNGVPNPPIRVYDTSGP) are disordered. Positions 22 to 39 (VYVDGPREGMKVPMREIE) are enriched in basic and acidic residues. Substrate-binding positions include Asn193, Met222, Tyr251, His287, 307–309 (SRG), 348–351 (DGLR), and Glu387. His391 contributes to the Zn(2+) binding site. Tyr414 contacts substrate. His455 provides a ligand contact to Zn(2+). [4Fe-4S] cluster-binding residues include Cys535, Cys538, and Cys543.

The protein belongs to the ThiC family. Requires [4Fe-4S] cluster as cofactor.

It catalyses the reaction 5-amino-1-(5-phospho-beta-D-ribosyl)imidazole + S-adenosyl-L-methionine = 4-amino-2-methyl-5-(phosphooxymethyl)pyrimidine + CO + 5'-deoxyadenosine + formate + L-methionine + 3 H(+). The protein operates within cofactor biosynthesis; thiamine diphosphate biosynthesis. Its function is as follows. Catalyzes the synthesis of the hydroxymethylpyrimidine phosphate (HMP-P) moiety of thiamine from aminoimidazole ribotide (AIR) in a radical S-adenosyl-L-methionine (SAM)-dependent reaction. This Bacillus cereus (strain ATCC 14579 / DSM 31 / CCUG 7414 / JCM 2152 / NBRC 15305 / NCIMB 9373 / NCTC 2599 / NRRL B-3711) protein is Phosphomethylpyrimidine synthase.